A 96-amino-acid polypeptide reads, in one-letter code: Integration host factor subunit beta (96 aa).

The protein belongs to the bacterial histone-like protein family. As to quaternary structure, heterodimer of an alpha and a beta chain.

This protein is one of the two subunits of integration host factor, a specific DNA-binding protein that functions in genetic recombination as well as in transcriptional and translational control. The chain is Integration host factor subunit beta from Caulobacter vibrioides (strain ATCC 19089 / CIP 103742 / CB 15) (Caulobacter crescentus).